A 674-amino-acid chain; its full sequence is Xaa-Pro aminopeptidase 2 (674 aa).

Positions M1–G21 are cleaved as a signal peptide. N-linked (GlcNAc...) asparagine glycans are attached at residues N35, N49, and N65. R116 serves as a coordination point for substrate. N-linked (GlcNAc...) asparagine glycans are attached at residues N278 and N291. Substrate is bound at residue H430. Zn(2+) contacts are provided by D450, D461, and H524. Substrate-binding residues include H524, H533, and E555. 2 residues coordinate Zn(2+): E555 and E569. A649 carries GPI-anchor amidated alanine lipidation. Residues A650–V674 constitute a propeptide, removed in mature form.

The protein belongs to the peptidase M24B family. In terms of assembly, homotrimer. Zn(2+) serves as cofactor. Post-translationally, N-glycosylated. As to expression, expressed in kidney, lung, heart, placenta, liver, small intestine and colon. No expression in brain, skeletal muscle, pancreas, spleen, thymus, prostate, testis and ovary.

The protein resides in the cell membrane. It carries out the reaction Release of any N-terminal amino acid, including proline, that is linked to proline, even from a dipeptide or tripeptide.. Inhibited by apstatin and the chelating agent 1,10-phenanthroline. Also inhibited by high concentrations of Zn(2+). Not significantly inhibited by bestatin or phosphoramidon. In terms of biological role, membrane-bound metalloprotease which catalyzes the removal of a penultimate prolyl residue from the N-termini of peptides, such as Arg-Pro-Pro. May play a role in the metabolism of the vasodilator bradykinin. The chain is Xaa-Pro aminopeptidase 2 (XPNPEP2) from Homo sapiens (Human).